The following is a 150-amino-acid chain: D-aminoacyl-tRNA deacylase (150 aa).

The Gly-cisPro motif, important for rejection of L-amino acids signature appears at 138–139 (GP).

The protein belongs to the DTD family. Homodimer.

It localises to the cytoplasm. It catalyses the reaction glycyl-tRNA(Ala) + H2O = tRNA(Ala) + glycine + H(+). It carries out the reaction a D-aminoacyl-tRNA + H2O = a tRNA + a D-alpha-amino acid + H(+). Functionally, an aminoacyl-tRNA editing enzyme that deacylates mischarged D-aminoacyl-tRNAs. Also deacylates mischarged glycyl-tRNA(Ala), protecting cells against glycine mischarging by AlaRS. Acts via tRNA-based rather than protein-based catalysis; rejects L-amino acids rather than detecting D-amino acids in the active site. By recycling D-aminoacyl-tRNA to D-amino acids and free tRNA molecules, this enzyme counteracts the toxicity associated with the formation of D-aminoacyl-tRNA entities in vivo and helps enforce protein L-homochirality. The polypeptide is D-aminoacyl-tRNA deacylase (Porphyromonas gingivalis (strain ATCC 33277 / DSM 20709 / CIP 103683 / JCM 12257 / NCTC 11834 / 2561)).